Consider the following 120-residue polypeptide: MSKLKITNARRKQRVRLSLRRIANGRPRLSVFRSSKHIYAQVIDDLKGETLASASSLEKAMRDAGNTGADIDAAKAVGKLVAERAVKNGVKEVVFDRGGYLYHGRVKALADAARESGLSF.

The protein belongs to the universal ribosomal protein uL18 family. Part of the 50S ribosomal subunit; part of the 5S rRNA/L5/L18/L25 subcomplex. Contacts the 5S and 23S rRNAs.

Its function is as follows. This is one of the proteins that bind and probably mediate the attachment of the 5S RNA into the large ribosomal subunit, where it forms part of the central protuberance. In Nitrobacter winogradskyi (strain ATCC 25391 / DSM 10237 / CIP 104748 / NCIMB 11846 / Nb-255), this protein is Large ribosomal subunit protein uL18.